Consider the following 229-residue polypeptide: ABC transporter I family member 1 (229 aa).

The ABC transporter domain maps to 11 to 228; it reads LLLQNVSCMR…LIDMLDRADI (218 aa). Residue 43 to 50 participates in ATP binding; sequence GTNGSGKS.

Belongs to the ABC transporter superfamily. ABCI family.

The protein localises to the membrane. The enzyme catalyses heme b(in) + ATP + H2O = heme b(out) + ADP + phosphate + H(+). In terms of biological role, part of the ABC transporter complex CcmAB involved in the biogenesis of c-type cytochromes; once thought to export heme, this seems not to be the case, but its exact role is uncertain. Responsible for energy coupling to the transport system. In Arabidopsis thaliana (Mouse-ear cress), this protein is ABC transporter I family member 1 (ABCI1).